The primary structure comprises 351 residues: uncharacterized protein (351 aa).

Positions 1–27 are cleaved as a signal peptide; sequence MKNKKRVLIASSLSCAILLLSAATTQA. Residues 29–71 form a disordered region; sequence SAHKDSQDQNKKEHVDKSQQKDKRNVTNKDKNSTVPDDIGKNG. The span at 30–60 shows a compositional bias: basic and acidic residues; that stretch reads AHKDSQDQNKKEHVDKSQQKDKRNVTNKDKN.

The protein belongs to the aerolysin family.

This is an uncharacterized protein from Staphylococcus aureus (strain Mu50 / ATCC 700699).